A 170-amino-acid chain; its full sequence is Large ribosomal subunit protein uL10 (170 aa).

Belongs to the universal ribosomal protein uL10 family. In terms of assembly, part of the ribosomal stalk of the 50S ribosomal subunit. The N-terminus interacts with L11 and the large rRNA to form the base of the stalk. The C-terminus forms an elongated spine to which L12 dimers bind in a sequential fashion forming a multimeric L10(L12)X complex.

Forms part of the ribosomal stalk, playing a central role in the interaction of the ribosome with GTP-bound translation factors. The chain is Large ribosomal subunit protein uL10 from Jannaschia sp. (strain CCS1).